The sequence spans 384 residues: Mitogen-activated protein kinase 8 (384 aa).

Residues 26–321 (YQNLKPIGSG…VDEALQHPYI (296 aa)) enclose the Protein kinase domain. Residues 32 to 40 (IGSGAQGIV) and Lys55 each bind ATP. S-nitrosocysteine is present on Cys116. Asp151 (proton acceptor) is an active-site residue. Thr183 is modified (phosphothreonine; by MAP2K7). Residues 183–185 (TPY) carry the TXY motif. Position 185 is a phosphotyrosine; by MAP2K4 (Tyr185). Phosphoserine is present on Ser377.

This sequence belongs to the protein kinase superfamily. CMGC Ser/Thr protein kinase family. MAP kinase subfamily. Binds to at least four scaffolding proteins, MAPK8IP1/JIP-1, MAPK8IP2/JIP-2, MAPK8IP3/JIP-3/JSAP1 and SPAG9/MAPK8IP4/JIP-4. These proteins also bind other components of the JNK signaling pathway. Forms a complex with MAPK8IP1 and ARHGEF28. Interacts with TP53 and WWOX. Interacts with JAMP. Interacts with NFATC4. Interacts with MECOM; regulates JNK signaling. Interacts with PIN1; this interaction mediates MAPK8 conformational changes leading to the binding of MAPK8 to its substrates. Interacts with HSF1 (via D domain and preferentially with hyperphosphorylated form); this interaction occurs under both normal growth conditions and immediately upon heat shock. Interacts (phosphorylated form) with NFE2; the interaction phosphorylates NFE2 in undifferentiated cells. Interacts with GRIPAP1. Interacts with POU5F1; phosphorylates POU5F1 at 'Ser-347'. Found in a complex with SH3RF1, RAC1, MAP3K11/MLK3, MAP2K7/MKK7 and MAPK8IP1/JIP1. Found in a complex with SH3RF1, RAC2, MAP3K7/TAK1, MAP2K7/MKK7, MAPK8IP1/JIP1 and MAPK9/JNK2. Requires Mg(2+) as cofactor. Phosphorylated by TAOK2. Dually phosphorylated on Thr-183 and Tyr-185 by MAP2K7 and MAP2K4, which activates the enzyme. May be phosphorylated at Thr-183 and Tyr-185 by MAP3K1/MEKK1. Phosphorylated form is more concentrated at synapses than none-phosphorylated. In terms of tissue distribution, brain (at protein level).

Its subcellular location is the cytoplasm. The protein resides in the nucleus. It is found in the synapse. The catalysed reaction is L-seryl-[protein] + ATP = O-phospho-L-seryl-[protein] + ADP + H(+). It catalyses the reaction L-threonyl-[protein] + ATP = O-phospho-L-threonyl-[protein] + ADP + H(+). Inhibited by SERPINB3. Activated by threonine and tyrosine phosphorylation by either of two dual specificity kinases, MAP2K4 and MAP2K7. MAP2K4 shows a strong preference for Tyr-185 while MAP2K7 phosphorylates Tyr-183 preferentially. Inhibited by dual specificity phosphatases, such as DUSP1. In terms of biological role, serine/threonine-protein kinase involved in various processes such as cell proliferation, differentiation, migration, transformation and programmed cell death. Extracellular stimuli such as pro-inflammatory cytokines or physical stress stimulate the stress-activated protein kinase/c-Jun N-terminal kinase (SAP/JNK) signaling pathway. In this cascade, two dual specificity kinases MAP2K4/MKK4 and MAP2K7/MKK7 phosphorylate and activate MAPK8/JNK1. In turn, MAPK8/JNK1 phosphorylates a number of transcription factors, primarily components of AP-1 such as JUN, JDP2 and ATF2 and thus regulates AP-1 transcriptional activity. Phosphorylates the replication licensing factor CDT1, inhibiting the interaction between CDT1 and the histone H4 acetylase HBO1 to replication origins. Loss of this interaction abrogates the acetylation required for replication initiation. Promotes stressed cell apoptosis by phosphorylating key regulatory factors including p53/TP53 and Yes-associates protein YAP1. In T-cells, MAPK8 and MAPK9 are required for polarized differentiation of T-helper cells into Th1 cells. Contributes to the survival of erythroid cells by phosphorylating the antagonist of cell death BAD upon EPO stimulation. Mediates starvation-induced BCL2 phosphorylation, BCL2 dissociation from BECN1, and thus activation of autophagy. Phosphorylates STMN2 and hence regulates microtubule dynamics, controlling neurite elongation in cortical neurons. In the developing brain, through its cytoplasmic activity on STMN2, negatively regulates the rate of exit from multipolar stage and of radial migration from the ventricular zone. Phosphorylates several other substrates including heat shock factor protein 4 (HSF4), the deacetylase SIRT1, ELK1, or the E3 ligase ITCH. Phosphorylates the CLOCK-BMAL1 heterodimer and plays a role in the regulation of the circadian clock. Phosphorylates the heat shock transcription factor HSF1, suppressing HSF1-induced transcriptional activity. Phosphorylates POU5F1, which results in the inhibition of POU5F1's transcriptional activity and enhances its proteasomal degradation. Phosphorylates JUND and this phosphorylation is inhibited in the presence of MEN1. In neurons, phosphorylates SYT4 which captures neuronal dense core vesicles at synapses. Phosphorylates EIF4ENIF1/4-ET in response to oxidative stress, promoting P-body assembly. Phosphorylates SIRT6 in response to oxidative stress, stimulating its mono-ADP-ribosyltransferase activity. Phosphorylates NLRP3, promoting assembly of the NLRP3 inflammasome. Phosphorylates ALKBH5 in response to reactive oxygen species (ROS), promoting ALKBH5 sumoylation and inactivation. The chain is Mitogen-activated protein kinase 8 (Mapk8) from Mus musculus (Mouse).